A 236-amino-acid polypeptide reads, in one-letter code: Ureidoacrylate amidohydrolase RutB (236 aa).

The active-site Proton acceptor is the aspartate 24. Lysine 133 is an active-site residue. The Nucleophile role is filled by cysteine 166.

The protein belongs to the isochorismatase family. RutB subfamily.

It catalyses the reaction (Z)-3-ureidoacrylate + H2O + H(+) = (Z)-3-aminoacrylate + NH4(+) + CO2. It carries out the reaction (Z)-3-ureidoacrylate + H2O = (Z)-3-aminoacrylate + carbamate + H(+). The catalysed reaction is (Z)-2-methylureidoacrylate + H2O + H(+) = (Z)-2-methylaminoacrylate + NH4(+) + CO2. Its function is as follows. Hydrolyzes ureidoacrylate to form aminoacrylate and carbamate. The carbamate hydrolyzes spontaneously, thereby releasing one of the nitrogen atoms of the pyrimidine ring as ammonia and one of its carbon atoms as CO2. The chain is Ureidoacrylate amidohydrolase RutB from Klebsiella pneumoniae subsp. pneumoniae (strain ATCC 700721 / MGH 78578).